Here is a 256-residue protein sequence, read N- to C-terminus: MAVGKNKRLSKGKKGVKKRTVDPFTRKDEYSVKAPSTFQTRDVGKTLVNRTSGLKNANDSLKGRIFEVSLADLQNDEDHAFRKVKLRVDEIQGKNCLTNFHGLDFTTDKLRSLVRKWQSLIEANVTVKTTDDYLLRLFAIAFTKRRPNQIKKTTYARSSQIRAIRKKMTEIMQREAASCSLAQLTTKLIPEVIGREIEKATQGIYPLQNVHIRKVKLLKSPKFDLGALLNLHGESTTDDKGHKVEREFKEQVLESV.

Residues 1 to 18 are compositionally biased toward basic residues; sequence MAVGKNKRLSKGKKGVKK. Residues 1–21 are disordered; the sequence is MAVGKNKRLSKGKKGVKKRTV. N-acetylalanine; partial is present on A2.

Belongs to the eukaryotic ribosomal protein eS1 family. In terms of assembly, component of the small ribosomal subunit. Mature ribosomes consist of a small (40S) and a large (60S) subunit. The 40S subunit contains about 33 different proteins and 1 molecule of RNA (18S). The 60S subunit contains about 49 different proteins and 3 molecules of RNA (25S, 5.8S and 5S).

Its subcellular location is the cytoplasm. The polypeptide is Small ribosomal subunit protein eS1 (rps1) (Aspergillus niger (strain ATCC MYA-4892 / CBS 513.88 / FGSC A1513)).